A 279-amino-acid chain; its full sequence is Urease accessory protein UreD (279 aa).

Belongs to the UreD family. As to quaternary structure, ureD, UreF and UreG form a complex that acts as a GTP-hydrolysis-dependent molecular chaperone, activating the urease apoprotein by helping to assemble the nickel containing metallocenter of UreC. The UreE protein probably delivers the nickel.

The protein resides in the cytoplasm. Its function is as follows. Required for maturation of urease via the functional incorporation of the urease nickel metallocenter. This Trichodesmium erythraeum (strain IMS101) protein is Urease accessory protein UreD.